The chain runs to 273 residues: Undecaprenyl-diphosphatase (273 aa).

The next 8 helical transmembrane spans lie at 7 to 27, 45 to 65, 89 to 109, 115 to 135, 152 to 171, 189 to 209, 221 to 241, and 253 to 273; these read LWIAAILGLVEGLTEFLPVSS, AETFEVVIQLGSILAVVVMFW, LTLIHILLGMVPAVVIGLLLH, LFNPVNVMYALVVGGVLLIAA, TYRQAFMIGCFQCLALWPGF, YAASEFSFLLAVPMMIGATGL, ADFPMFAVGFVTAFIVALIAI, and FIPFAIYRFIVAAAVYALFVL.

Belongs to the UppP family.

The protein localises to the cell inner membrane. It catalyses the reaction di-trans,octa-cis-undecaprenyl diphosphate + H2O = di-trans,octa-cis-undecaprenyl phosphate + phosphate + H(+). Catalyzes the dephosphorylation of undecaprenyl diphosphate (UPP). Confers resistance to bacitracin. The protein is Undecaprenyl-diphosphatase of Erwinia tasmaniensis (strain DSM 17950 / CFBP 7177 / CIP 109463 / NCPPB 4357 / Et1/99).